The primary structure comprises 96 residues: Large ribosomal subunit protein eL43 (96 aa).

Zn(2+) is bound by residues Cys-41, Cys-44, Cys-59, and Cys-62. The C4-type zinc-finger motif lies at 41 to 62 (CPVCAFPKLKRAGTSIWVCEKC).

Belongs to the eukaryotic ribosomal protein eL43 family. Putative zinc-binding subfamily. Part of the 50S ribosomal subunit. Zn(2+) serves as cofactor.

In terms of biological role, binds to the 23S rRNA. In Methanococcus maripaludis (strain DSM 14266 / JCM 13030 / NBRC 101832 / S2 / LL), this protein is Large ribosomal subunit protein eL43.